We begin with the raw amino-acid sequence, 1160 residues long: Pesticidal crystal protein Cry8Ca (1160 aa).

The protein belongs to the delta endotoxin family.

Functionally, promotes colloidosmotic lysis by binding to the midgut epithelial cells of insects. Active on various scarabaeid beetles such as Anomala cuprea, A.rufocuprea and Popillia japonica. The protein is Pesticidal crystal protein Cry8Ca (cry8Ca) of Bacillus thuringiensis subsp. japonensis.